Consider the following 238-residue polypeptide: Thrombin-like enzyme AhV_TL-I (238 aa).

Residues 1 to 229 (IIGGDECNIN…HLDWIENIIA (229 aa)) form the Peptidase S1 domain. Cystine bridges form between cysteine 7–cysteine 141, cysteine 28–cysteine 44, cysteine 76–cysteine 236, cysteine 120–cysteine 190, cysteine 152–cysteine 169, and cysteine 180–cysteine 205. The active-site Charge relay system is histidine 43. N-linked (GlcNAc...) asparagine glycosylation is present at asparagine 81. The Charge relay system role is filled by aspartate 88. Serine 184 (charge relay system) is an active-site residue.

Belongs to the peptidase S1 family. Snake venom subfamily. In terms of assembly, monomer. In terms of processing, N-glycosylated at Asn-81 by a disaccharide composed of two N-acetylglucosamine (NAG). The presence of this N-glycan deforms the enzyme and Removing the carbohydrate moiety increases the esterase activity, but induces a complete loss of contractile response on mouse thoracic aorta. Expressed by the venom gland.

The protein localises to the secreted. With respect to regulation, inhibited by PMSF, L-cysteine and partially by SBTI and leupeptin. Its function is as follows. Thrombin-like enzyme that shows fibrinogenolytic activity against both the Aalpha (FGA) and Bbeta (FGB) chains of bovine fibrinogen. This enzyme has poor esterolytic activity upon BAEE substrate. It induces mouse thoracic aortic ring contraction with EC(50)=147 nmol/L. It shows vasoconstrictor effects that are independent of the enzymatic activity, but related to the release of calcium ions form the calcium store, potentially through the activation of ryanodine receptors. The chain is Thrombin-like enzyme AhV_TL-I from Gloydius halys (Chinese water mocassin).